The sequence spans 689 residues: Potassium-transporting ATPase ATP-binding subunit (689 aa).

Helical transmembrane passes span 35 to 55 (VMFV…AILA), 62 to 82 (AAFT…ANFA), 220 to 240 (ALTI…ATLF), and 260 to 280 (VLVA…LSAI). The 4-aspartylphosphate intermediate role is filled by aspartate 313. ATP contacts are provided by residues aspartate 350, glutamate 354, 383 to 390 (FSAQTRMS), and lysine 401. 2 residues coordinate Mg(2+): aspartate 524 and aspartate 528. Transmembrane regions (helical) follow at residues 594–614 (FAII…LNVM), 622–642 (AIMS…PLAL), and 665–685 (VGGL…LVAL).

This sequence belongs to the cation transport ATPase (P-type) (TC 3.A.3) family. Type IA subfamily. In terms of assembly, the system is composed of three essential subunits: KdpA, KdpB and KdpC.

Its subcellular location is the cell inner membrane. It catalyses the reaction K(+)(out) + ATP + H2O = K(+)(in) + ADP + phosphate + H(+). In terms of biological role, part of the high-affinity ATP-driven potassium transport (or Kdp) system, which catalyzes the hydrolysis of ATP coupled with the electrogenic transport of potassium into the cytoplasm. This subunit is responsible for energy coupling to the transport system and for the release of the potassium ions to the cytoplasm. The chain is Potassium-transporting ATPase ATP-binding subunit from Serratia proteamaculans (strain 568).